Reading from the N-terminus, the 243-residue chain is Lipid II isoglutaminyl synthase (glutamine-hydrolyzing) subunit GatD (243 aa).

A GATase cobBQ-type domain is found at 6-197 (IYHFMSDKLN…LHGPILPKNY (192 aa)). Catalysis depends on Cys94, which acts as the Nucleophile. Arg128 is a binding site for substrate. Residue His189 is part of the active site.

This sequence belongs to the CobB/CobQ family. GatD subfamily. As to quaternary structure, forms a heterodimer with MurT.

It carries out the reaction beta-D-GlcNAc-(1-&gt;4)-Mur2Ac(oyl-L-Ala-gamma-D-Glu-L-Lys-D-Ala-D-Ala)-di-trans,octa-cis-undecaprenyl diphosphate + L-glutamine + ATP + H2O = beta-D-GlcNAc-(1-&gt;4)-Mur2Ac(oyl-L-Ala-D-isoglutaminyl-L-Lys-D-Ala-D-Ala)-di-trans,octa-cis-undecaprenyl diphosphate + L-glutamate + ADP + phosphate + H(+). The catalysed reaction is L-glutamine + H2O = L-glutamate + NH4(+). It functions in the pathway cell wall biogenesis; peptidoglycan biosynthesis. Functionally, the lipid II isoglutaminyl synthase complex catalyzes the formation of alpha-D-isoglutamine in the cell wall lipid II stem peptide. The GatD subunit catalyzes the hydrolysis of glutamine to glutamate and ammonia. The resulting ammonia molecule is channeled to the active site of MurT. The protein is Lipid II isoglutaminyl synthase (glutamine-hydrolyzing) subunit GatD of Staphylococcus aureus (strain N315).